A 233-amino-acid chain; its full sequence is ATP-dependent dethiobiotin synthetase BioD (233 aa).

ATP is bound at residue 12–17; sequence EVGKTY. Thr-16 is a binding site for Mg(2+). The active site involves Lys-37. ATP contacts are provided by residues Asp-54, 120–123, and 186–187; these read EGAG and ND. Positions 54 and 120 each coordinate Mg(2+).

Belongs to the dethiobiotin synthetase family. Homodimer. The cofactor is Mg(2+).

The protein resides in the cytoplasm. The enzyme catalyses (7R,8S)-7,8-diammoniononanoate + CO2 + ATP = (4R,5S)-dethiobiotin + ADP + phosphate + 3 H(+). Its pathway is cofactor biosynthesis; biotin biosynthesis; biotin from 7,8-diaminononanoate: step 1/2. In terms of biological role, catalyzes a mechanistically unusual reaction, the ATP-dependent insertion of CO2 between the N7 and N8 nitrogen atoms of 7,8-diaminopelargonic acid (DAPA, also called 7,8-diammoniononanoate) to form a ureido ring. In Alteromonas mediterranea (strain DSM 17117 / CIP 110805 / LMG 28347 / Deep ecotype), this protein is ATP-dependent dethiobiotin synthetase BioD.